The sequence spans 112 residues: Putative pterin-4-alpha-carbinolamine dehydratase (112 aa).

This sequence belongs to the pterin-4-alpha-carbinolamine dehydratase family.

The catalysed reaction is (4aS,6R)-4a-hydroxy-L-erythro-5,6,7,8-tetrahydrobiopterin = (6R)-L-erythro-6,7-dihydrobiopterin + H2O. The protein is Putative pterin-4-alpha-carbinolamine dehydratase of Shewanella oneidensis (strain ATCC 700550 / JCM 31522 / CIP 106686 / LMG 19005 / NCIMB 14063 / MR-1).